Reading from the N-terminus, the 210-residue chain is Somatotropin-2 (210 aa).

The first 22 residues, Met1 to Ala22, serve as a signal peptide directing secretion. A Zn(2+)-binding site is contributed by His38. The cysteines at positions 71 and 183 are disulfide-linked. Glu192 serves as a coordination point for Zn(2+). Cys200 and Cys208 are disulfide-bonded.

It belongs to the somatotropin/prolactin family.

The protein localises to the secreted. Its function is as follows. Growth hormone plays an important role in growth control and is involved in the regulation of several anabolic processes. Implicated as an osmoregulatory substance important for seawater adaptation. The protein is Somatotropin-2 (gh2) of Oncorhynchus mykiss (Rainbow trout).